Consider the following 500-residue polypeptide: Glutamate--tRNA ligase (500 aa).

Positions 12–22 match the 'HIGH' region motif; the sequence is PSPTGHLHIGN. Positions 259 to 263 match the 'KMSKS' region motif; sequence KLSKR. Lys-262 is a binding site for ATP.

The protein belongs to the class-I aminoacyl-tRNA synthetase family. Glutamate--tRNA ligase type 1 subfamily. Monomer.

It localises to the cytoplasm. The catalysed reaction is tRNA(Glu) + L-glutamate + ATP = L-glutamyl-tRNA(Glu) + AMP + diphosphate. Functionally, catalyzes the attachment of glutamate to tRNA(Glu) in a two-step reaction: glutamate is first activated by ATP to form Glu-AMP and then transferred to the acceptor end of tRNA(Glu). This Lactobacillus delbrueckii subsp. bulgaricus protein is Glutamate--tRNA ligase.